The primary structure comprises 266 residues: 3-deoxy-manno-octulosonate cytidylyltransferase 1 (266 aa).

The protein belongs to the KdsB family.

It localises to the cytoplasm. The enzyme catalyses 3-deoxy-alpha-D-manno-oct-2-ulosonate + CTP = CMP-3-deoxy-beta-D-manno-octulosonate + diphosphate. It functions in the pathway nucleotide-sugar biosynthesis; CMP-3-deoxy-D-manno-octulosonate biosynthesis; CMP-3-deoxy-D-manno-octulosonate from 3-deoxy-D-manno-octulosonate and CTP: step 1/1. The protein operates within bacterial outer membrane biogenesis; lipopolysaccharide biosynthesis. Its function is as follows. Activates KDO (a required 8-carbon sugar) for incorporation into bacterial lipopolysaccharide in Gram-negative bacteria. The sequence is that of 3-deoxy-manno-octulosonate cytidylyltransferase 1 from Paraburkholderia phytofirmans (strain DSM 17436 / LMG 22146 / PsJN) (Burkholderia phytofirmans).